The chain runs to 146 residues: Large ribosomal subunit protein uL16 (146 aa).

This sequence belongs to the universal ribosomal protein uL16 family. As to quaternary structure, part of the 50S ribosomal subunit.

Binds 23S rRNA and is also seen to make contacts with the A and possibly P site tRNAs. This is Large ribosomal subunit protein uL16 from Caulobacter sp. (strain K31).